The following is a 793-amino-acid chain: uncharacterized protein (793 aa).

A signal peptide spans 1 to 22 (MKFKYGAIFFSGFLGLSAILAA). Cys23 carries N-palmitoyl cysteine lipidation. Cys23 is lipidated: S-diacylglycerol cysteine. 3 disordered regions span residues 181–200 (LNQK…TLTV), 212–264 (KIED…DDQV), and 444–504 (KAPS…SNNN). Over residues 212–227 (KIEDSAKANGKSDEKG) the composition is skewed to basic and acidic residues. The segment covering 237–246 (ATFSLVQLKQ) has biased composition (polar residues). Residues 247–264 (TQEKTDDSQDTKNSDDQV) are compositionally biased toward basic and acidic residues. A compositionally biased stretch (polar residues) spans 449–468 (NGENGQTNEGNSTNGEQNLL). The span at 472 to 485 (EVKDDSKPKEEVKS) shows a compositional bias: basic and acidic residues. Over residues 491-504 (KESSQNQGKKSNNN) the composition is skewed to low complexity.

Belongs to the MG185/MG260 family.

It is found in the cell membrane. This is an uncharacterized protein from Mycoplasma pneumoniae (strain ATCC 29342 / M129 / Subtype 1) (Mycoplasmoides pneumoniae).